The following is a 332-amino-acid chain: Torsin-1A (332 aa).

The N-terminal stretch at 1-20 (MKLGRAVLGLLLLAPSVVQA) is a signal peptide. Residues 91–251 (KPKKPLTLSL…VSVFNNKNSG (161 aa)) are interaction with SNAPIN. 102–109 (GWTGTGKN) is an ATP binding site. N-linked (GlcNAc...) (high mannose) asparagine glycosylation is found at Asn143 and Asn158. An interaction with KLC1 region spans residues 251-332 (GFWHSSLIDR…FTKLDYYYDD (82 aa)). Positions 312–332 (RVFSDKGCKTVFTKLDYYYDD) are interaction with SYNE3.

It belongs to the ClpA/ClpB family. Torsin subfamily. Homohexamer. Interacts with TOR1B; the interaction may be specific of neural tissues. Interacts (ATP-bound) with TOR1AIP1 and TOR1AIP2; the interactions induce ATPase activity. Interacts with KLHL14; preferentially when ATP-free. Interacts with KLC1 (via TPR repeats); the interaction associates TOR1A with the kinesin oligomeric complex. Interacts with COPS4; the interaction associates TOR1A with the CSN complex. Interacts with SNAPIN; the interaction is direct and associates SNAPIN with the CSN complex. Interacts with STON2. Interacts (ATP-bound) with SYNE3 (via KASH domain); the interaction is required for SYNE3 nuclear envelope localization. Interacts with VIM; the interaction associates TOR1A with the cytoskeleton. Interacts with PLEC. Interacts (ATP-bound) with SLC6A3; regulates SLC6A3 transport to the plasma membrane. N-glycosylated. Widely expressed. Highest levels in kidney and liver. In the brain, high levels found in the dopaminergic neurons of the substantia nigra pars compacta, as well as in the neocortex, hippocampus and cerebellum. Also highly expressed in the spinal cord.

The protein localises to the endoplasmic reticulum lumen. It is found in the nucleus membrane. Its subcellular location is the cell projection. The protein resides in the growth cone. It localises to the cytoplasmic vesicle membrane. The protein localises to the cytoplasmic vesicle. It is found in the secretory vesicle. Its subcellular location is the synaptic vesicle. The protein resides in the cytoplasm. It localises to the cytoskeleton. The catalysed reaction is ATP + H2O = ADP + phosphate + H(+). In terms of biological role, protein with chaperone functions important for the control of protein folding, processing, stability and localization as well as for the reduction of misfolded protein aggregates. Involved in the regulation of synaptic vesicle recycling, controls STON2 protein stability in collaboration with the COP9 signalosome complex (CSN). In the nucleus, may link the cytoskeleton with the nuclear envelope, this mechanism seems to be crucial for the control of nuclear polarity, cell movement and, specifically in neurons, nuclear envelope integrity. Participates in the cellular trafficking and may regulate the subcellular location of multipass membrane proteins such as the dopamine transporter SLC6A3, leading to the modulation of dopamine neurotransmission. In the endoplasmic reticulum, plays a role in the quality control of protein folding by increasing clearance of misfolded proteins such as SGCE variants or holding them in an intermediate state for proper refolding. May have a redundant function with TOR1B in non-neural tissues. The protein is Torsin-1A (TOR1A) of Homo sapiens (Human).